Here is a 522-residue protein sequence, read N- to C-terminus: Endochitinase 11 (522 aa).

The signal sequence occupies residues 1 to 24; sequence MLFSMVMFTERWWVGSKDCPRVPA. 2 N-linked (GlcNAc...) asparagine glycosylation sites follow: N148 and N275. One can recognise a GH18 domain in the interval 235–522; the sequence is KHVYAPYVDF…ALTCLRNSTA (288 aa). E346 acts as the Proton donor in catalysis. N-linked (GlcNAc...) asparagine glycans are attached at residues N455 and N519.

It belongs to the glycosyl hydrolase 18 family. Chitinase class V subfamily.

The protein resides in the secreted. The enzyme catalyses Random endo-hydrolysis of N-acetyl-beta-D-glucosaminide (1-&gt;4)-beta-linkages in chitin and chitodextrins.. Secreted chitinase involved in the degradation of chitin, a component of the cell walls of fungi and exoskeletal elements of some animals (including worms and arthropods). Participates in the infection process and directly acts in the penetration process of the host cuticle. The chain is Endochitinase 11 (chi11) from Metarhizium anisopliae (Entomophthora anisopliae).